The chain runs to 486 residues: Arginine/agmatine antiporter (486 aa).

12 helical membrane-spanning segments follow: residues 12–32 (LGAI…GIFS), 41–61 (AGAG…FFIA), 85–105 (GFGP…QIFG), 129–149 (NTIP…FIVL), 161–181 (IGTI…AFFF), 211–231 (STML…VMSA), 242–262 (ATIL…LLPF), 296–316 (IGLL…VAEI), 341–361 (VSLY…YFST), 367–387 (MLSI…AFLV), 418–438 (IWLI…LLAL), and 461–481 (EVTK…LFST).

Belongs to the amino acid-polyamine-organocation (APC) superfamily. Basic amino acid/polyamine antiporter (APA) (TC 2.A.3.2) family.

The protein resides in the cell inner membrane. Functionally, catalyzes the exchange of L-arginine for agmatine. The arginine uptake by the bacterium in the macrophage may be a virulence factor against the host innate immune response. This Chlamydia felis (strain Fe/C-56) (Chlamydophila felis) protein is Arginine/agmatine antiporter (aaxC).